The primary structure comprises 360 residues: MSLTRLHIETFRNITSAQLLPGEGINLIYGHNGSGKTSILEAIYFLGMGRSFRSHLSQRVIQHSDDKLTLFANLNVLDKESKIGLRRFRSGETEVKIDGDKVKRLSTLAESLPIQVITPESFALLFEGPKSRRQFIDWGAFHCDKSFHSAWVNVKRILKQRNQLLKNETSYSQIQFWDKELVRYSEVVTDIRTRYVNSLNEQLKGIIGEFLPLVDVKVSFTRGWDSKTDYAQLLEMQYPRDLASGNTGSGPHKADLRLRVGTLPVQDALSRGQLKLLVCALRIAQGKLLKQQIDKNSIYLVDDLPAELDAKHRQLLLQQLIDTGAQVFVTAIEPAAILDSLITPPSKTFHVEHGRVTVIE.

30 to 37 (GHNGSGKT) is a binding site for ATP.

The protein belongs to the RecF family.

The protein resides in the cytoplasm. Its function is as follows. The RecF protein is involved in DNA metabolism; it is required for DNA replication and normal SOS inducibility. RecF binds preferentially to single-stranded, linear DNA. It also seems to bind ATP. The polypeptide is DNA replication and repair protein RecF (Shewanella sediminis (strain HAW-EB3)).